The following is a 152-amino-acid chain: Regulator of G-protein signaling 21 (152 aa).

The 117-residue stretch at 21–137 (NMDTLLANQA…LKSEIYKKLV (117 aa)) folds into the RGS domain.

Expressed ubiquitously.

Its function is as follows. Inhibits signal transduction by increasing the GTPase activity of G protein alpha subunits thereby driving them into their inactive GDP-bound form. The chain is Regulator of G-protein signaling 21 (RGS21) from Homo sapiens (Human).